The chain runs to 164 residues: IQ domain-containing protein F2 (164 aa).

IQ domains follow at residues Arg43–Ile72 and Arg99–Ile128.

This Homo sapiens (Human) protein is IQ domain-containing protein F2 (IQCF2).